The sequence spans 124 residues: Large ribosomal subunit protein uL22 (124 aa).

It belongs to the universal ribosomal protein uL22 family. Part of the 50S ribosomal subunit.

Its function is as follows. This protein binds specifically to 23S rRNA; its binding is stimulated by other ribosomal proteins, e.g. L4, L17, and L20. It is important during the early stages of 50S assembly. It makes multiple contacts with different domains of the 23S rRNA in the assembled 50S subunit and ribosome. Functionally, the globular domain of the protein is located near the polypeptide exit tunnel on the outside of the subunit, while an extended beta-hairpin is found that lines the wall of the exit tunnel in the center of the 70S ribosome. The polypeptide is Large ribosomal subunit protein uL22 (Synechococcus sp. (strain JA-2-3B'a(2-13)) (Cyanobacteria bacterium Yellowstone B-Prime)).